The sequence spans 117 residues: Immunoglobulin kappa variable 1-5 (117 aa).

An N-terminal signal peptide occupies residues 1–22 (MDMRVPAQLLGLLLLWLPGAKC). Residues 23 to 45 (DIQMTQSPSTLSASVGDRVTITC) are framework-1. In terms of domain architecture, Ig-like spans 24 to 117 (IQMTQSPSTL…YYCQQYNSYS (94 aa)). Cysteines 45 and 110 form a disulfide. Residues 46 to 56 (RASQSISSWLA) are complementarity-determining-1. Residues 57–71 (WYQQKPGKAPKLLIY) form a framework-2 region. Residues 72–78 (KASSLES) are complementarity-determining-2. The segment at 79–110 (GVPSRFSGSGSGTEFTLTISSLQPDDFATYYC) is framework-3. Residues 111-117 (QQYNSYS) are complementarity-determining-3.

Immunoglobulins are composed of two identical heavy chains and two identical light chains; disulfide-linked.

The protein localises to the secreted. The protein resides in the cell membrane. In terms of biological role, v region of the variable domain of immunoglobulin light chains that participates in the antigen recognition. Immunoglobulins, also known as antibodies, are membrane-bound or secreted glycoproteins produced by B lymphocytes. In the recognition phase of humoral immunity, the membrane-bound immunoglobulins serve as receptors which, upon binding of a specific antigen, trigger the clonal expansion and differentiation of B lymphocytes into immunoglobulins-secreting plasma cells. Secreted immunoglobulins mediate the effector phase of humoral immunity, which results in the elimination of bound antigens. The antigen binding site is formed by the variable domain of one heavy chain, together with that of its associated light chain. Thus, each immunoglobulin has two antigen binding sites with remarkable affinity for a particular antigen. The variable domains are assembled by a process called V-(D)-J rearrangement and can then be subjected to somatic hypermutations which, after exposure to antigen and selection, allow affinity maturation for a particular antigen. The polypeptide is Immunoglobulin kappa variable 1-5 (Homo sapiens (Human)).